The sequence spans 573 residues: ESX-1 secretion system protein EccA1 (573 aa).

334–341 (GPPGTGKT) provides a ligand contact to ATP.

This sequence belongs to the CbxX/CfxQ family. As to quaternary structure, part of the ESX-1 / type VII secretion system (T7SS), which is composed of cytosolic and membrane components.

It is found in the cytoplasm. In terms of biological role, part of the ESX-1 / type VII specialized secretion system (T7SS), which exports several proteins including EsxA and EsxB. EccA1 exhibits ATPase activity and may provide energy for the export of ESX-1 substrates. The polypeptide is ESX-1 secretion system protein EccA1 (Mycobacterium leprae (strain TN)).